The chain runs to 1209 residues: Phospholipid-transporting ATPase ID (1209 aa).

Residues 1-68 (MTVPKEIPEK…NIVTFLPVNL (68 aa)) are Cytoplasmic-facing. Positions 12 to 36 (ARAGAPPSWSQKKPSWGTEEERRAR) are disordered. The chain crosses the membrane as a helical span at residues 69–89 (FEQFQEVANTYFLFLLILQLI). The Exoplasmic loop portion of the chain corresponds to 90–91 (PQ). Residues 92–112 (ISSLSWFTTIVPLVLVLTITA) form a helical membrane-spanning segment. Residues 113-295 (VKDATDDYFR…TSIDRLMNTL (183 aa)) are Cytoplasmic-facing. Residues 296–316 (VLWIFGFLVCMGVILAIGNAI) form a helical membrane-spanning segment. Residues 317–338 (WEHEVGTRFQVYLPWDEAVDSA) lie on the Exoplasmic loop side of the membrane. Residues 339-359 (FFSGFLSFWSYIIILNTVVPI) traverse the membrane as a helical segment. Topologically, residues 360–898 (SLYVSVEVIR…KFLCYFFYKN (539 aa)) are cytoplasmic. Catalysis depends on Asp-411, which acts as the 4-aspartylphosphate intermediate. Residues Asp-411, Lys-412, Thr-413, Glu-515, Phe-556, Lys-579, Arg-613, Thr-693, Gly-694, Asp-695, Arg-807, and Lys-813 each coordinate ATP. Position 411 (Asp-411) interacts with Mg(2+). Thr-413 contributes to the Mg(2+) binding site. Asp-833 serves as a coordination point for Mg(2+). ATP-binding residues include Asn-836 and Asp-837. Asp-837 is a Mg(2+) binding site. A helical transmembrane segment spans residues 899–919 (FAFTMVHFWFGFFCGFSAQTV). The Exoplasmic loop segment spans residues 920 to 922 (YDQ). Residues 923 to 943 (YFITLYNIVYTSLPVLAMGVF) form a helical membrane-spanning segment. Residues 944-972 (DQDVPEQRSMEYPKLYEPGQLNLLFNKRE) are Cytoplasmic-facing. Residues 973 to 993 (FFICIAQGIYTSVLMFFIPYG) traverse the membrane as a helical segment. Over 994–1011 (VFAEATRDDGTQLADYQS) the chain is Exoplasmic loop. A helical transmembrane segment spans residues 1012 to 1032 (FAVTVATSLVIVVSVQIGLDT). The Cytoplasmic portion of the chain corresponds to 1033-1036 (GYWT). The helical transmembrane segment at 1037 to 1057 (AINHFFIWGSLAVYFAILFAM) threads the bilayer. The Exoplasmic loop portion of the chain corresponds to 1058–1082 (HSNGLFDMFPNQFRFVGNAQNTLAQ). Residues 1083 to 1103 (PTVWLTIALTTAVCIMPVVAF) traverse the membrane as a helical segment. The Cytoplasmic segment spans residues 1104-1209 (RFLRLSLKPD…SGGAEKPLKG (106 aa)). The residue at position 1175 (Ser-1175) is a Phosphoserine. The interval 1179 to 1209 (RSSSSWIESLRRKKSDSANSPSGGAEKPLKG) is disordered.

The protein belongs to the cation transport ATPase (P-type) (TC 3.A.3) family. Type IV subfamily. In terms of assembly, component of a P4-ATPase flippase complex which consists of a catalytic alpha subunit ATP8B2 and an accessory beta subunit TMEM30A or TMEM30B. Requires Mg(2+) as cofactor. Expressed in brain and testes (at protein level).

It is found in the cell membrane. The protein resides in the endoplasmic reticulum membrane. The enzyme catalyses ATP + H2O + phospholipidSide 1 = ADP + phosphate + phospholipidSide 2.. It carries out the reaction a 1,2-diacyl-sn-glycero-3-phosphocholine(out) + ATP + H2O = a 1,2-diacyl-sn-glycero-3-phosphocholine(in) + ADP + phosphate + H(+). Catalytic component of P4-ATPase flippase complex, which catalyzes the hydrolysis of ATP coupled to the transport of phosphatidylcholine (PC) from the outer to the inner leaflet of the plasma membrane. May contribute to the maintenance of membrane lipid asymmetry. In Mus musculus (Mouse), this protein is Phospholipid-transporting ATPase ID.